Consider the following 278-residue polypeptide: Potassium/proton antiporter CemA (278 aa).

4 helical membrane-spanning segments follow: residues 61–81, 155–175, 203–223, and 238–258; these read ILLL…FVFG, AVKN…LMIT, IILF…EVII, and FIFL…KYWI.

It belongs to the CemA family.

The protein resides in the plastid. Its subcellular location is the chloroplast inner membrane. It catalyses the reaction K(+)(in) + H(+)(out) = K(+)(out) + H(+)(in). Functionally, contributes to K(+)/H(+) antiport activity by supporting proton efflux to control proton extrusion and homeostasis in chloroplasts in a light-dependent manner to modulate photosynthesis. Prevents excessive induction of non-photochemical quenching (NPQ) under continuous-light conditions. Indirectly promotes efficient inorganic carbon uptake into chloroplasts. This is Potassium/proton antiporter CemA from Pyropia yezoensis (Susabi-nori).